A 240-amino-acid chain; its full sequence is 2,3,4,5-tetrahydropyridine-2,6-dicarboxylate N-acetyltransferase (240 aa).

The protein belongs to the transferase hexapeptide repeat family. DapH subfamily.

It carries out the reaction (S)-2,3,4,5-tetrahydrodipicolinate + acetyl-CoA + H2O = L-2-acetamido-6-oxoheptanedioate + CoA. Its pathway is amino-acid biosynthesis; L-lysine biosynthesis via DAP pathway; LL-2,6-diaminopimelate from (S)-tetrahydrodipicolinate (acetylase route): step 1/3. Catalyzes the transfer of an acetyl group from acetyl-CoA to tetrahydrodipicolinate. This is 2,3,4,5-tetrahydropyridine-2,6-dicarboxylate N-acetyltransferase from Bacillus cytotoxicus (strain DSM 22905 / CIP 110041 / 391-98 / NVH 391-98).